The chain runs to 200 residues: dITP/XTP pyrophosphatase (200 aa).

7-12 is a substrate binding site; that stretch reads TSNKHK. Positions 38 and 73 each coordinate Mg(2+). Asp-73 (proton acceptor) is an active-site residue. Substrate is bound by residues Ser-74, 154 to 157, Lys-177, and 182 to 183; these read FGYD and HR.

The protein belongs to the HAM1 NTPase family. As to quaternary structure, homodimer. The cofactor is Mg(2+).

The catalysed reaction is XTP + H2O = XMP + diphosphate + H(+). The enzyme catalyses dITP + H2O = dIMP + diphosphate + H(+). It carries out the reaction ITP + H2O = IMP + diphosphate + H(+). Pyrophosphatase that catalyzes the hydrolysis of nucleoside triphosphates to their monophosphate derivatives, with a high preference for the non-canonical purine nucleotides XTP (xanthosine triphosphate), dITP (deoxyinosine triphosphate) and ITP. Seems to function as a house-cleaning enzyme that removes non-canonical purine nucleotides from the nucleotide pool, thus preventing their incorporation into DNA/RNA and avoiding chromosomal lesions. The sequence is that of dITP/XTP pyrophosphatase from Campylobacter jejuni subsp. jejuni serotype O:6 (strain 81116 / NCTC 11828).